Reading from the N-terminus, the 271-residue chain is Undecaprenyl-diphosphatase (271 aa).

8 helical membrane passes run 5-25, 43-63, 80-100, 109-129, 145-165, 186-206, 215-235, and 246-266; these read LLIKAFIMGIVEGLTEFLPIS, FATMFEIVIQLGAILAVVYYF, GFNLWYKTFIAFLPAAIIGIL, LFSPFTVAIALIVGAIMMIVI, VSTSKAFWIGVAQVMSLFPGM, AEFSFFLAIPTMLAATGFELV, LEWEALAVGFIMSFITALIVV, and VLKPFAYYRLLVGVLMLFLIA.

This sequence belongs to the UppP family.

It localises to the cell membrane. The enzyme catalyses di-trans,octa-cis-undecaprenyl diphosphate + H2O = di-trans,octa-cis-undecaprenyl phosphate + phosphate + H(+). Its function is as follows. Catalyzes the dephosphorylation of undecaprenyl diphosphate (UPP). Confers resistance to bacitracin. The polypeptide is Undecaprenyl-diphosphatase (Caldanaerobacter subterraneus subsp. tengcongensis (strain DSM 15242 / JCM 11007 / NBRC 100824 / MB4) (Thermoanaerobacter tengcongensis)).